Reading from the N-terminus, the 161-residue chain is Nucleotide-binding protein Spea_3114 (161 aa).

The protein belongs to the YajQ family.

Nucleotide-binding protein. The sequence is that of Nucleotide-binding protein Spea_3114 from Shewanella pealeana (strain ATCC 700345 / ANG-SQ1).